The following is a 79-amino-acid chain: Ferredoxin (79 aa).

2 consecutive 4Fe-4S ferredoxin-type domains span residues 2–30 (PHVI…YDGG) and 31–60 (DQFY…PEED). C9 and C17 together coordinate [3Fe-4S] cluster. 4 residues coordinate [4Fe-4S] cluster: C21, C40, C43, and C46. [3Fe-4S] cluster is bound at residue C50.

The cofactor is [4Fe-4S] cluster. Requires [3Fe-4S] cluster as cofactor.

Its function is as follows. Ferredoxins are iron-sulfur proteins that transfer electrons in a wide variety of metabolic reactions. The protein is Ferredoxin of Thermus thermophilus (strain ATCC 27634 / DSM 579 / HB8).